Consider the following 403-residue polypeptide: Phosphoglycerate kinase (403 aa).

Substrate-binding positions include 21–23, Arg36, 59–62, Arg119, and Arg154; these read DFN and HLGR. Residues Lys207, Gly299, Glu330, and 357 to 360 contribute to the ATP site; that span reads GGDA.

The protein belongs to the phosphoglycerate kinase family. In terms of assembly, monomer.

It localises to the cytoplasm. The catalysed reaction is (2R)-3-phosphoglycerate + ATP = (2R)-3-phospho-glyceroyl phosphate + ADP. The protein operates within carbohydrate degradation; glycolysis; pyruvate from D-glyceraldehyde 3-phosphate: step 2/5. In Chlamydia trachomatis serovar A (strain ATCC VR-571B / DSM 19440 / HAR-13), this protein is Phosphoglycerate kinase.